A 308-amino-acid polypeptide reads, in one-letter code: Putative protein TIC 214 N-terminal part (308 aa).

Helical transmembrane passes span 18–38 (IINS…FSIG), 64–84 (FITG…HLAL), 87–107 (PHTI…WNNH), 124–144 (LSIQ…HFIL), 172–192 (VGWL…LSWI), and 215–235 (IFSI…PSPI). A compositionally biased stretch (basic and acidic residues) spans 239–249 (KLKETSEMEER). Positions 239-308 (KLKETSEMEE…RDPSEWKGNI (70 aa)) are disordered. Positions 250–262 (GESEEETDVEIET) are enriched in acidic residues. Residues 264–273 (SETKETKQEQ) show a composition bias toward basic and acidic residues. The span at 275–293 (GSTEEDPSLCSEEQEDPDK) shows a compositional bias: acidic residues. Positions 294-308 (LDETGRDPSEWKGNI) are enriched in basic and acidic residues.

This sequence belongs to the TIC214 family. In terms of assembly, part of the Tic complex.

The protein resides in the plastid. It is found in the chloroplast inner membrane. Functionally, involved in protein precursor import into chloroplasts. May be part of an intermediate translocation complex acting as a protein-conducting channel at the inner envelope. The chain is Putative protein TIC 214 N-terminal part from Piper cenocladum (Ant piper).